Here is a 250-residue protein sequence, read N- to C-terminus: Probable transcriptional regulatory protein Cvib_1432 (250 aa).

It belongs to the TACO1 family.

Its subcellular location is the cytoplasm. The sequence is that of Probable transcriptional regulatory protein Cvib_1432 from Chlorobium phaeovibrioides (strain DSM 265 / 1930) (Prosthecochloris vibrioformis (strain DSM 265)).